A 254-amino-acid chain; its full sequence is Ribose-5-phosphate isomerase A (254 aa).

Residues 45-48 (TGST), 105-108 (DGAD), and 118-121 (KGGG) each bind substrate. The active-site Proton acceptor is Glu-127. Substrate is bound at residue Lys-145.

The protein belongs to the ribose 5-phosphate isomerase family. Homodimer.

It catalyses the reaction aldehydo-D-ribose 5-phosphate = D-ribulose 5-phosphate. Its pathway is carbohydrate degradation; pentose phosphate pathway; D-ribose 5-phosphate from D-ribulose 5-phosphate (non-oxidative stage): step 1/1. Catalyzes the reversible conversion of ribose-5-phosphate to ribulose 5-phosphate. In Treponema pallidum subsp. pallidum (strain SS14), this protein is Ribose-5-phosphate isomerase A.